The sequence spans 2290 residues: Protein Ycf2 (2290 aa).

The tract at residues 505–530 (GSNPTERSTRDQKSLKKQQDVSFVPP) is disordered. Residues 511–523 (RSTRDQKSLKKQQ) are compositionally biased toward basic and acidic residues. 1639–1646 (GSIGTGRS) provides a ligand contact to ATP.

This sequence belongs to the Ycf2 family.

It localises to the plastid. The protein resides in the chloroplast stroma. Its function is as follows. Probable ATPase of unknown function. Its presence in a non-photosynthetic plant (Epifagus virginiana) and experiments in tobacco indicate that it has an essential function which is probably not related to photosynthesis. The sequence is that of Protein Ycf2 from Ceratophyllum demersum (Rigid hornwort).